Here is a 536-residue protein sequence, read N- to C-terminus: Bifunctional purine biosynthesis protein PurH (536 aa).

The region spanning 8 to 158 (IPAPDEVRIK…KNHAYVTIVT (151 aa)) is the MGS-like domain.

It belongs to the PurH family.

The catalysed reaction is (6R)-10-formyltetrahydrofolate + 5-amino-1-(5-phospho-beta-D-ribosyl)imidazole-4-carboxamide = 5-formamido-1-(5-phospho-D-ribosyl)imidazole-4-carboxamide + (6S)-5,6,7,8-tetrahydrofolate. It carries out the reaction IMP + H2O = 5-formamido-1-(5-phospho-D-ribosyl)imidazole-4-carboxamide. It participates in purine metabolism; IMP biosynthesis via de novo pathway; 5-formamido-1-(5-phospho-D-ribosyl)imidazole-4-carboxamide from 5-amino-1-(5-phospho-D-ribosyl)imidazole-4-carboxamide (10-formyl THF route): step 1/1. It functions in the pathway purine metabolism; IMP biosynthesis via de novo pathway; IMP from 5-formamido-1-(5-phospho-D-ribosyl)imidazole-4-carboxamide: step 1/1. The chain is Bifunctional purine biosynthesis protein PurH from Rhizobium meliloti (strain 1021) (Ensifer meliloti).